Consider the following 119-residue polypeptide: Holo-[acyl-carrier-protein] synthase (119 aa).

Asp8 and Glu58 together coordinate Mg(2+).

This sequence belongs to the P-Pant transferase superfamily. AcpS family. Requires Mg(2+) as cofactor.

Its subcellular location is the cytoplasm. The catalysed reaction is apo-[ACP] + CoA = holo-[ACP] + adenosine 3',5'-bisphosphate + H(+). Its function is as follows. Transfers the 4'-phosphopantetheine moiety from coenzyme A to a Ser of acyl-carrier-protein. The chain is Holo-[acyl-carrier-protein] synthase from Halalkalibacterium halodurans (strain ATCC BAA-125 / DSM 18197 / FERM 7344 / JCM 9153 / C-125) (Bacillus halodurans).